The primary structure comprises 206 residues: MRELTKRQSEIYDYIKKIVQTKGYPPSVREIGEAVGLASSSTVHGHLSRLEEKGYIRRDPTKPRAIEIVSEQLDEVNVEETIHVPVIGKVTAGVPITAVENIEEYFPLPEHLTSTHNSDIFILNVVGESMIEAGILDGDKVIVRSQTIAENGDIIVAMTEDEEATVKRFYKEKNRYRLQPENSTMEPIYLDNVIVVGKVIGLYREM.

Residues 28–48 (VREIGEAVGLASSSTVHGHLS) constitute a DNA-binding region (H-T-H motif). Residues serine 129 and lysine 167 each act as for autocatalytic cleavage activity in the active site.

The protein belongs to the peptidase S24 family. Homodimer.

It carries out the reaction Hydrolysis of Ala-|-Gly bond in repressor LexA.. Its function is as follows. Represses a number of genes involved in the response to DNA damage (SOS response), including recA and lexA. In the presence of single-stranded DNA, RecA interacts with LexA causing an autocatalytic cleavage which disrupts the DNA-binding part of LexA, leading to derepression of the SOS regulon and eventually DNA repair. The protein is LexA repressor of Staphylococcus epidermidis (strain ATCC 35984 / DSM 28319 / BCRC 17069 / CCUG 31568 / BM 3577 / RP62A).